The sequence spans 617 residues: Alkaline/neutral invertase E, chloroplastic (617 aa).

The transit peptide at 1–45 (MAASETVLRVPLGSVSQSCYLASFFVNSTPNLSFKPVSRNRKTVR) directs the protein to the chloroplast. Residue Ser87 is modified to Phosphoserine.

It belongs to the glycosyl hydrolase 100 family. Expressed in roots, leaves and flowers.

The protein localises to the plastid. It localises to the chloroplast. It carries out the reaction Hydrolysis of terminal non-reducing beta-D-fructofuranoside residues in beta-D-fructofuranosides.. Functionally, chloroplastic invertase that cleaves sucrose into glucose and fructose and is associated with the development of the photosynthetic apparatus and the assimilation of nitrogen in seedlings to control the sucrose to hexose ratio. Participates in the carbon flux between the cytosol and plastids in leaves. This Arabidopsis thaliana (Mouse-ear cress) protein is Alkaline/neutral invertase E, chloroplastic.